Consider the following 241-residue polypeptide: 2-C-methyl-D-erythritol 4-phosphate cytidylyltransferase (241 aa).

Belongs to the IspD/TarI cytidylyltransferase family. IspD subfamily. As to quaternary structure, homodimer.

The enzyme catalyses 2-C-methyl-D-erythritol 4-phosphate + CTP + H(+) = 4-CDP-2-C-methyl-D-erythritol + diphosphate. It functions in the pathway isoprenoid biosynthesis; isopentenyl diphosphate biosynthesis via DXP pathway; isopentenyl diphosphate from 1-deoxy-D-xylulose 5-phosphate: step 2/6. Its function is as follows. Catalyzes the formation of 4-diphosphocytidyl-2-C-methyl-D-erythritol from CTP and 2-C-methyl-D-erythritol 4-phosphate (MEP). The sequence is that of 2-C-methyl-D-erythritol 4-phosphate cytidylyltransferase from Yersinia pestis.